Reading from the N-terminus, the 316-residue chain is tRNA dimethylallyltransferase (316 aa).

17–24 (GPTASGKT) is an ATP binding site. A substrate-binding site is contributed by 19–24 (TASGKT). Interaction with substrate tRNA stretches follow at residues 42 to 45 (DSAL), 166 to 170 (QRLSR), and 247 to 252 (RCVGYR).

This sequence belongs to the IPP transferase family. As to quaternary structure, monomer. It depends on Mg(2+) as a cofactor.

It carries out the reaction adenosine(37) in tRNA + dimethylallyl diphosphate = N(6)-dimethylallyladenosine(37) in tRNA + diphosphate. Its function is as follows. Catalyzes the transfer of a dimethylallyl group onto the adenine at position 37 in tRNAs that read codons beginning with uridine, leading to the formation of N6-(dimethylallyl)adenosine (i(6)A). This Salmonella newport (strain SL254) protein is tRNA dimethylallyltransferase.